Consider the following 337-residue polypeptide: Methionyl-tRNA formyltransferase (337 aa).

116–119 (SILP) is a binding site for (6S)-5,6,7,8-tetrahydrofolate.

It belongs to the Fmt family.

The catalysed reaction is L-methionyl-tRNA(fMet) + (6R)-10-formyltetrahydrofolate = N-formyl-L-methionyl-tRNA(fMet) + (6S)-5,6,7,8-tetrahydrofolate + H(+). Functionally, attaches a formyl group to the free amino group of methionyl-tRNA(fMet). The formyl group appears to play a dual role in the initiator identity of N-formylmethionyl-tRNA by promoting its recognition by IF2 and preventing the misappropriation of this tRNA by the elongation apparatus. The chain is Methionyl-tRNA formyltransferase from Desulfovibrio desulfuricans (strain ATCC 27774 / DSM 6949 / MB).